We begin with the raw amino-acid sequence, 582 residues long: Eukaryotic translation initiation factor 2A (582 aa).

WD repeat units lie at residues 21-63 (GPPK…NIVN), 73-124 (LDLP…NVKS), 273-314 (PKNG…IFDF), and 358-402 (TASD…LHKY). The interval 436–533 (DLPTQESKPA…NTGDPETDKK (98 aa)) is disordered. Residues 482–580 (SKTALKNQKK…LLKELEDLEI (99 aa)) are a coiled coil. Positions 495-506 (KKAAKQESKMDE) are enriched in basic and acidic residues. A compositionally biased stretch (polar residues) spans 510–522 (SDSTNVQNNTPVA).

The protein belongs to the WD repeat EIF2A family.

Its function is as follows. Functions in the early steps of protein synthesis of a small number of specific mRNAs. Acts by directing the binding of methionyl-tRNAi to 40S ribosomal subunits. In contrast to the eIF-2 complex, it binds methionyl-tRNAi to 40S subunits in a codon-dependent manner, whereas the eIF-2 complex binds methionyl-tRNAi to 40S subunits in a GTP-dependent manner. In Xenopus laevis (African clawed frog), this protein is Eukaryotic translation initiation factor 2A (eif2a).